The primary structure comprises 479 residues: MFS-type transporter lnaF (479 aa).

The next 11 helical transmembrane spans lie at tryptophan 47 to proline 67, glycine 71 to isoleucine 91, leucine 104 to isoleucine 124, tryptophan 136 to leucine 156, leucine 177 to glycine 197, isoleucine 208 to tryptophan 228, isoleucine 250 to phenylalanine 270, leucine 283 to valine 303, isoleucine 306 to leucine 326, isoleucine 344 to valine 364, and leucine 372 to alanine 392. Asparagine 416 carries an N-linked (GlcNAc...) asparagine glycan. Residues leucine 442–alanine 462 traverse the membrane as a helical segment.

The protein belongs to the major facilitator superfamily. TCR/Tet family.

The protein localises to the cell membrane. MFS-type transporter; part of the lnb gene cluster that mediates the biosynthesis of diastereomeric piperazines. Lna and lnb clusters encode sets of enzymes that produce overlapping sets of previously undescribed metabolites such as piperazinomycin-like metabolites or morpholine. The lna and lnb biosynthetic pathways appear to be part of a signaling network that controls the formation of sclerotia, a resilient overwintering structure. May be involved in the secretion of the metabolites produced by the lna and lnb clusters. This is MFS-type transporter lnaF from Aspergillus flavus (strain ATCC 200026 / FGSC A1120 / IAM 13836 / NRRL 3357 / JCM 12722 / SRRC 167).